Consider the following 586-residue polypeptide: 25S rRNA (adenine-N(1))-methyltransferase (586 aa).

Disordered regions lie at residues 23 to 229 (GTAP…LTPL) and 536 to 573 (GKCV…EVKD). A compositionally biased stretch (low complexity) spans 25 to 41 (APAAPAPASAPAVSSSK). Residues 65-83 (LWEKVIEQKKEGVADGVKK) show a composition bias toward basic and acidic residues. Over residues 99-108 (KLSNSNNDGN) the composition is skewed to polar residues. A compositionally biased stretch (basic residues) spans 114–123 (NNKKKNKNKN). Acidic residues predominate over residues 144–163 (GEEDEDDNNDDADEWEGIDE). Positions 164–182 (DEKHASSEKPTPKKDDKKQ) are enriched in basic and acidic residues. Residues 183-192 (QQLQQQQQQK) show a composition bias toward low complexity. Over residues 204–213 (NGTTSNWQQD) the composition is skewed to polar residues. The segment covering 217–229 (PKTATPAPKLTPL) has biased composition (low complexity). A compositionally biased stretch (basic and acidic residues) spans 539–549 (VPKDGQEDTTK). The span at 550-559 (NKKGGQKPKP) shows a compositional bias: basic residues.

Belongs to the methyltransferase superfamily. RRP8 family.

The protein localises to the nucleus. Its subcellular location is the nucleolus. Its function is as follows. S-adenosyl-L-methionine-dependent methyltransferase that specifically methylates the N(1) position of a conserved adenine in helix 25.1 in 25S rRNA. Required both for ribosomal 40S and 60S subunits biogenesis. Required for efficient pre-rRNA cleavage at site A2. The protein is 25S rRNA (adenine-N(1))-methyltransferase (RPR8) of Chaetomium thermophilum (strain DSM 1495 / CBS 144.50 / IMI 039719) (Thermochaetoides thermophila).